A 255-amino-acid polypeptide reads, in one-letter code: Pyridoxine 5'-phosphate synthase (255 aa).

Asn-6 is a binding site for 3-amino-2-oxopropyl phosphate. 8–9 (DH) is a 1-deoxy-D-xylulose 5-phosphate binding site. Arg-17 lines the 3-amino-2-oxopropyl phosphate pocket. His-41 functions as the Proton acceptor in the catalytic mechanism. The 1-deoxy-D-xylulose 5-phosphate site is built by Arg-43 and His-48. The Proton acceptor role is filled by Glu-68. Thr-96 provides a ligand contact to 1-deoxy-D-xylulose 5-phosphate. His-208 serves as the catalytic Proton donor. 3-amino-2-oxopropyl phosphate-binding positions include Gly-209 and 230 to 231 (GQ).

Belongs to the PNP synthase family. As to quaternary structure, homooctamer; tetramer of dimers.

Its subcellular location is the cytoplasm. The catalysed reaction is 3-amino-2-oxopropyl phosphate + 1-deoxy-D-xylulose 5-phosphate = pyridoxine 5'-phosphate + phosphate + 2 H2O + H(+). It functions in the pathway cofactor biosynthesis; pyridoxine 5'-phosphate biosynthesis; pyridoxine 5'-phosphate from D-erythrose 4-phosphate: step 5/5. Catalyzes the complicated ring closure reaction between the two acyclic compounds 1-deoxy-D-xylulose-5-phosphate (DXP) and 3-amino-2-oxopropyl phosphate (1-amino-acetone-3-phosphate or AAP) to form pyridoxine 5'-phosphate (PNP) and inorganic phosphate. The polypeptide is Pyridoxine 5'-phosphate synthase (Campylobacter lari (strain RM2100 / D67 / ATCC BAA-1060)).